The chain runs to 521 residues: MREDLLLGFLLLGLLWEAPVVSSGPGKELPVVWAQEGAPVHLPCSLKSPNLDPNFLRRGGVIWQHQPDSGQPTPIPALDLHQGMPSPRQPAPGRYTVLSVAPGGLRSGRQPLHPHVQLEERGLQRGDFSLWLRPALRTDAGEYHATVRLPNRALSCSLRLRVGQASMIASPSGVLKLSDWVLLNCSFSRPDRPVSVHWFQGQNRVPVYNSPRHFLAETFLLLPQVSPLDSGTWGCVLTYRDGFNVSITYNLKVLGLEPVAPLTVYAAEGSRVELPCHLPPGVGTPSLLIAKWTPPGGGPELPVAGKSGNFTLHLEAVGLAQAGTYTCSIHLQGQQLNATVTLAVITVTPKSFGLPGSRGKLLCEVTPASGKERFVWRPLNNLSRSCPGPVLEIQEARLLAERWQCQLYEGQRLLGATVYAAESSSGAHSARRISGDLKGGHLVLVLILGALSLFLLVAGAFGFHWWRKQLLLRRFSALEHGIQPFPAQRKIEELERELETEMGQEPEPEPEPQLEPEPRQL.

Positions 1 to 23 (MREDLLLGFLLLGLLWEAPVVSS) are cleaved as a signal peptide. At 24–442 (GPGKELPVVW…ISGDLKGGHL (419 aa)) the chain is on the extracellular side. The Ig-like V-type domain maps to 37–163 (GAPVHLPCSL…LSCSLRLRVG (127 aa)). Residues 37-246 (GAPVHLPCSL…LTYRDGFNVS (210 aa)) are interaction with FGL1. A disulfide bond links Cys-44 and Cys-156. Ig-like C2-type domains lie at 165-246 (ASMI…FNVS), 258-341 (PVAP…ATVT), and 345-412 (ITVT…EGQR). An N-linked (GlcNAc...) asparagine glycan is attached at Asn-184. A disulfide bridge links Cys-185 with Cys-235. Asn-244, Asn-309, Asn-337, and Asn-381 each carry an N-linked (GlcNAc...) asparagine glycan. Cys-276 and Cys-327 are oxidised to a cystine. Cys-363 and Cys-405 form a disulfide bridge. Residues 422-442 (ESSSGAHSARRISGDLKGGHL) form a connecting peptide region. The helical transmembrane segment at 443-463 (VLVLILGALSLFLLVAGAFGF) threads the bilayer. The Cytoplasmic segment spans residues 464 to 521 (HWWRKQLLLRRFSALEHGIQPFPAQRKIEELERELETEMGQEPEPEPEPQLEPEPRQL). Residues 490 to 495 (KIEELE) carry the KIEELE motif motif. The tract at residues 493–518 (ELERELETEMGQEPEPEPEPQLEPEP) is 13 X 2 AA tandem repeats of E-X. The tract at residues 493-521 (ELERELETEMGQEPEPEPEPQLEPEPRQL) is disordered. The segment covering 500 to 514 (TEMGQEPEPEPEPQL) has biased composition (acidic residues).

The protein belongs to the LAG3 family. In terms of assembly, interacts with MHC class II (MHC-II); selectively recognizes stable complexes of peptide and MHC-II. Interacts with FGL1 (via the Fibrinogen C-terminal domain). In terms of processing, proteolytically cleaved by ADAM10 and ADAM17 within the connecting peptide region, leading to release of Secreted lymphocyte activation gene 3 protein (sLAG-3). ADAM10 mediates constitutive cleavage, but cleavage increases following T-cell activation, whereas shedding by ADAM17 is induced by TCR signaling in a PRKCQ-dependent manner. Primarily expressed in activated CD4(+) and CD8(+) T-cells. Also expressed in a subset of regulatory T-cells (Tregs), such as natural CD4(+)CD25(+) Tregs. Also expressed on plasmacytoid dendritic cells (pDCs).

It localises to the cell membrane. The protein localises to the secreted. Its function is as follows. Lymphocyte activation gene 3 protein: Inhibitory receptor on antigen activated T-cells. Delivers inhibitory signals upon binding to ligands, such as FGL1. FGL1 constitutes a major ligand of LAG3 and is responsible for LAG3 T-cell inhibitory function. Following TCR engagement, LAG3 associates with CD3-TCR in the immunological synapse and directly inhibits T-cell activation. May inhibit antigen-specific T-cell activation in synergy with PDCD1/PD-1, possibly by acting as a coreceptor for PDCD1/PD-1. Negatively regulates the proliferation, activation, effector function and homeostasis of both CD8(+) and CD4(+) T-cells. Also mediates immune tolerance: constitutively expressed on a subset of regulatory T-cells (Tregs) and contributes to their suppressive function. Also acts as a negative regulator of plasmacytoid dendritic cell (pDCs) activation. Binds MHC class II (MHC-II); the precise role of MHC-II-binding is however unclear. Functionally, may function as a ligand for MHC class II (MHC-II) on antigen-presenting cells (APC), promoting APC activation/maturation and driving Th1 immune response. In Mus musculus (Mouse), this protein is Lymphocyte activation gene 3 protein.